The primary structure comprises 432 residues: Adenylosuccinate synthetase (432 aa).

Residues 12–18 (GDEGKGK) and 40–42 (GHT) contribute to the GTP site. Aspartate 13 (proton acceptor) is an active-site residue. Mg(2+)-binding residues include aspartate 13 and glycine 40. Residues 13–16 (DEGK), 38–41 (NAGH), threonine 133, arginine 147, glutamine 228, threonine 243, and arginine 307 contribute to the IMP site. Catalysis depends on histidine 41, which acts as the Proton donor. Substrate is bound at residue 303–309 (TTTGRPR). GTP contacts are provided by residues arginine 309, 335–337 (KLD), and 417–419 (GVG).

Belongs to the adenylosuccinate synthetase family. In terms of assembly, homodimer. The cofactor is Mg(2+).

The protein resides in the cytoplasm. It catalyses the reaction IMP + L-aspartate + GTP = N(6)-(1,2-dicarboxyethyl)-AMP + GDP + phosphate + 2 H(+). It functions in the pathway purine metabolism; AMP biosynthesis via de novo pathway; AMP from IMP: step 1/2. In terms of biological role, plays an important role in the de novo pathway of purine nucleotide biosynthesis. Catalyzes the first committed step in the biosynthesis of AMP from IMP. The sequence is that of Adenylosuccinate synthetase from Nocardioides sp. (strain ATCC BAA-499 / JS614).